The sequence spans 374 residues: MKIEELIAIRRDLHRIPELGFQEFKTQQYLLNVLEQYPQDRIEIEKWRTGLFVKVNGTAPEKMLAYRADIDALSIEEQTGLPFASEHHGNMHACGHDLHMTIALGIIDHFVHHPVKHDLLFLFQPAEEGPGGAEPMLESDVLKKWQPDFITALHIAPELPVGTIATKSGLLFANTSELVIDLEGKGGHAAYPHLAEDMVVAASTLVTQLQTIISRNTDPLDSAVITVGTITGGSAQNIIAETAHLEGTIRTLSEESMKQVKERIEDVVKGIEIGFRCKGKVTYPSVYHQVYNTSGLTEEFMSFVAEHQLATVIEAKEAMTGEDFGYMLKKYPGFMFWLGADSEHGLHHAKLNPDENAIETAVHVMTGYFSVYAN.

The active site involves Asp69. Glu128 functions as the Proton acceptor in the catalytic mechanism.

Belongs to the peptidase M20A family. N-acetyldiaminopimelate deacetylase subfamily.

It carries out the reaction N-acetyl-(2S,6S)-2,6-diaminopimelate + H2O = (2S,6S)-2,6-diaminopimelate + acetate. It participates in amino-acid biosynthesis; L-lysine biosynthesis via DAP pathway; LL-2,6-diaminopimelate from (S)-tetrahydrodipicolinate (acetylase route): step 3/3. Catalyzes the conversion of N-acetyl-diaminopimelate to diaminopimelate and acetate. This chain is N-acetyldiaminopimelate deacetylase (ykuR), found in Bacillus subtilis (strain 168).